We begin with the raw amino-acid sequence, 520 residues long: Pleckstrin homology domain-containing family A member 8 (520 aa).

A PH domain is found at 1-93 (MEGVLYKWTN…WLVALGSAKA (93 aa)). Threonine 139 carries the phosphothreonine modification. Serine 145 carries the phosphoserine modification. A Phosphothreonine modification is found at threonine 153. Polar residues predominate over residues 255–268 (ISSEENTDGNTTVQ). Residues 255–303 (ISSEENTDGNTTVQGERMKEDGEENLESHDRDLAQPGSDSVCSPESPWE) are disordered. Residues 270-287 (ERMKEDGEENLESHDRDL) are compositionally biased toward basic and acidic residues. Residues 311 to 520 (TFFSTMNTSF…IHGLESDEVV (210 aa)) form a glycolipid transfer protein homology domain region.

As to quaternary structure, homodimer. Interacts with ARF1; the interaction together with phosphatidylinositol 4-phosphate binding is required for FAPP2 GlcCer transfer ability.

The protein resides in the golgi apparatus. It localises to the trans-Golgi network membrane. It is found in the membrane. Its function is as follows. Cargo transport protein that is required for apical transport from the trans-Golgi network (TGN). Transports AQP2 from the trans-Golgi network (TGN) to sites of AQP2 phosphorylation. Mediates the non-vesicular transport of glucosylceramide (GlcCer) from the trans-Golgi network (TGN) to the plasma membrane and plays a pivotal role in the synthesis of complex glycosphingolipids. Binding of both phosphatidylinositol 4-phosphate (PIP) and ARF1 are essential for the GlcCer transfer ability. Also required for primary cilium formation, possibly by being involved in the transport of raft lipids to the apical membrane, and for membrane tubulation. The chain is Pleckstrin homology domain-containing family A member 8 (Plekha8) from Rattus norvegicus (Rat).